A 174-amino-acid polypeptide reads, in one-letter code: SDLWVQKMKTYFNRIDFDKDGAITRMDFESMAERFAKESEMKAEHAKVLMDSLTGVWDNFLTAVAGGKGIDETTFINSMKEMVKNPEAKSVVEGPLPLFFRAVDTNEDNNISRDEYGIFFGMLGLDKTMAPASFDAIDTNNDGLLSLEEFVIAGSDFFMNDGDSTNKVFWGPLV.

An N-acetylserine modification is found at S1. EF-hand domains are found at residues 3–38 (LWVQKMKTYFNRIDFDKDGAITRMDFESMAERFAKE), 55–90 (GVWDNFLTAVAGGKGIDETTFINSMKEMVKNPEAKS), 91–126 (VVEGPLPLFFRAVDTNEDNNISRDEYGIFFGMLGLD), and 127–160 (KTMAPASFDAIDTNNDGLLSLEEFVIAGSDFFMN). Ca(2+) contacts are provided by D16, D18, D20, and D27. Residues D104, N106, D108, N110, E115, D138, N140, D142, and E149 each contribute to the Ca(2+) site.

Like parvalbumins, SCPs seem to be more abundant in fast contracting muscles, but no functional relationship can be established from this distribution. This Hediste diversicolor (Sandworm) protein is Sarcoplasmic calcium-binding protein.